The sequence spans 413 residues: Alpha-1-antitrypsin-like protein GS55-LT (413 aa).

The N-terminal stretch at 1–21 is a signal peptide; sequence MPSSISWGLLLLAGLSCLATG. Asparagine 65, asparagine 102, and asparagine 123 each carry an N-linked (GlcNAc...) asparagine glycan. Positions 368–387 are RCL; it reads RHTVKGPMALTLAPEVKFNR.

It belongs to the serpin family.

It is found in the secreted. Its function is as follows. Inhibitor of serine proteases. This is Alpha-1-antitrypsin-like protein GS55-LT from Ictidomys tridecemlineatus (Thirteen-lined ground squirrel).